The primary structure comprises 344 residues: NADH-ubiquinone oxidoreductase chain 2 (344 aa).

11 consecutive transmembrane segments (helical) span residues 1–21 (MNPL…TITL), 24–44 (FHWL…IPLM), 59–79 (YFLT…ISAW), 94–114 (MNIL…HFWI), 121–141 (ISLP…MALL), 150–170 (LNLT…GGIG), 177–197 (IMAF…KFDP), 201–221 (LLNF…LTTI), 245–265 (LILL…KLLI), 273–293 (NATL…FFYI), and 324–344 (TAIM…LLLL).

The protein belongs to the complex I subunit 2 family.

Its subcellular location is the mitochondrion inner membrane. It carries out the reaction a ubiquinone + NADH + 5 H(+)(in) = a ubiquinol + NAD(+) + 4 H(+)(out). Functionally, core subunit of the mitochondrial membrane respiratory chain NADH dehydrogenase (Complex I) that is believed to belong to the minimal assembly required for catalysis. Complex I functions in the transfer of electrons from NADH to the respiratory chain. The immediate electron acceptor for the enzyme is believed to be ubiquinone. The chain is NADH-ubiquinone oxidoreductase chain 2 (MT-ND2) from Aquarana catesbeiana (American bullfrog).